The following is a 430-amino-acid chain: GTPase Obg (430 aa).

The 158-residue stretch at 1 to 158 (MFVDQVKISL…LDVSLELKLL (158 aa)) folds into the Obg domain. Residues 118–145 (KGGRGGRGNSRFATPRNPAPDFSEKGEP) are disordered. Residues 159–329 (ADVGLVGFPS…LLYAIADKLE (171 aa)) enclose the OBG-type G domain. Residues 165-172 (GFPSVGKS), 190-194 (FTTIK), 212-215 (DLPG), 282-285 (NKMD), and 310-312 (STI) contribute to the GTP site. Residues S172 and T192 each contribute to the Mg(2+) site. Residues 352-430 (KHTPSQDKFT…ILGGEFEFVE (79 aa)) form the OCT domain.

Belongs to the TRAFAC class OBG-HflX-like GTPase superfamily. OBG GTPase family. Monomer. Requires Mg(2+) as cofactor.

It localises to the cytoplasm. An essential GTPase which binds GTP, GDP and possibly (p)ppGpp with moderate affinity, with high nucleotide exchange rates and a fairly low GTP hydrolysis rate. Plays a role in control of the cell cycle, stress response, ribosome biogenesis and in those bacteria that undergo differentiation, in morphogenesis control. The protein is GTPase Obg of Staphylococcus aureus (strain MRSA252).